The primary structure comprises 413 residues: 2,3-bisphosphoglycerate-independent phosphoglycerate mutase (413 aa).

The protein belongs to the BPG-independent phosphoglycerate mutase family. A-PGAM subfamily.

It carries out the reaction (2R)-2-phosphoglycerate = (2R)-3-phosphoglycerate. The protein operates within carbohydrate degradation; glycolysis; pyruvate from D-glyceraldehyde 3-phosphate: step 3/5. Functionally, catalyzes the interconversion of 2-phosphoglycerate and 3-phosphoglycerate. This chain is 2,3-bisphosphoglycerate-independent phosphoglycerate mutase, found in Sulfurisphaera tokodaii (strain DSM 16993 / JCM 10545 / NBRC 100140 / 7) (Sulfolobus tokodaii).